The primary structure comprises 405 residues: Secreted aspartic protease FUS4 (405 aa).

The first 24 residues, 1 to 24 (MLAIATLHVALQVFGAFSLSHAAA), serve as a signal peptide directing secretion. The Peptidase A1 domain maps to 49–400 (YLFNVTVGSP…NFEERSFGLA (352 aa)). N-linked (GlcNAc...) asparagine glycosylation is found at Asn-52, Asn-61, Asn-107, and Asn-123. A disulfide bond links Cys-318 and Cys-356.

This sequence belongs to the peptidase A1 family.

It localises to the secreted. Functionally, secreted aspartic protease; part of the gene cluster that mediates the biosynthesis of the mycotoxin fusarin C. Within the cluster, FUS1, FUS2, FUS8 and FUS9 are sufficient for fusarin production. The other FUS cluster members are not essential for fusarin C biosynthesis. This is Secreted aspartic protease FUS4 from Gibberella fujikuroi (strain CBS 195.34 / IMI 58289 / NRRL A-6831) (Bakanae and foot rot disease fungus).